The sequence spans 314 residues: Lipoyl synthase (314 aa).

Cysteine 55, cysteine 60, cysteine 66, cysteine 81, cysteine 85, cysteine 88, and serine 292 together coordinate [4Fe-4S] cluster. Residues 67-281 form the Radical SAM core domain; sequence WEDREATFLI…TQYAEGLGFS (215 aa).

The protein belongs to the radical SAM superfamily. Lipoyl synthase family. [4Fe-4S] cluster is required as a cofactor.

Its subcellular location is the cytoplasm. The enzyme catalyses [[Fe-S] cluster scaffold protein carrying a second [4Fe-4S](2+) cluster] + N(6)-octanoyl-L-lysyl-[protein] + 2 oxidized [2Fe-2S]-[ferredoxin] + 2 S-adenosyl-L-methionine + 4 H(+) = [[Fe-S] cluster scaffold protein] + N(6)-[(R)-dihydrolipoyl]-L-lysyl-[protein] + 4 Fe(3+) + 2 hydrogen sulfide + 2 5'-deoxyadenosine + 2 L-methionine + 2 reduced [2Fe-2S]-[ferredoxin]. Its pathway is protein modification; protein lipoylation via endogenous pathway; protein N(6)-(lipoyl)lysine from octanoyl-[acyl-carrier-protein]: step 2/2. Catalyzes the radical-mediated insertion of two sulfur atoms into the C-6 and C-8 positions of the octanoyl moiety bound to the lipoyl domains of lipoate-dependent enzymes, thereby converting the octanoylated domains into lipoylated derivatives. The protein is Lipoyl synthase of Mycobacterium leprae (strain Br4923).